The sequence spans 786 residues: Pheromone-regulated membrane protein 10 (786 aa).

The span at 1-28 (MADSGDKDVSKSVRFDKESIESKKRSSV) shows a compositional bias: basic and acidic residues. Disordered stretches follow at residues 1–65 (MADS…EDGN) and 77–103 (NGGAGLAPGLSKANSNQEKTDLEDNDN). The span at 29–42 (DDSASSYSSSSSGQ) shows a compositional bias: low complexity. 10 consecutive transmembrane segments (helical) span residues 469-489 (WVCVFLYGFCSAMVTPYAFGG), 491-511 (WINLAITFFMGSCVGMMQFIL), 521-541 (VFEITASIVVSFCGRAFGSIP), 545-565 (ICFGAITQGSLALILPGYIIL), 584-604 (FYAIIYSLFLGFGITLGAALF), 620-640 (PISPWFRFLFVPAFTIGISLI), 645-665 (WTQLPAMVFISCTGYVVTYWS), 675-695 (FTAALASFVIGILGNLYSRIW), 697-717 (GLAVSAMLPAIFVQVPSGIAS), and 751-771 (FGITMIEVSIGISVGLFASTL).

The protein belongs to the ThrE exporter (TC 2.A.79) family.

The protein resides in the membrane. The sequence is that of Pheromone-regulated membrane protein 10 from Candida glabrata (strain ATCC 2001 / BCRC 20586 / JCM 3761 / NBRC 0622 / NRRL Y-65 / CBS 138) (Yeast).